A 492-amino-acid polypeptide reads, in one-letter code: Ketol-acid reductoisomerase (NADP(+)) (492 aa).

The KARI N-terminal Rossmann domain maps to 15–208; it reads AQLGQCRFMD…GGDRAGVLQS (194 aa). NADP(+) is bound by residues 45 to 48, Arg-68, Arg-76, Ser-78, and 108 to 110; these read CGAQ and DKQ. His-132 is an active-site residue. Gly-158 contacts NADP(+). KARI C-terminal knotted domains lie at 209–353 and 354–486; these read SFIA…DEQT and YFDK…MTDM. Residues Asp-217, Glu-221, Glu-389, and Glu-393 each coordinate Mg(2+). Substrate is bound at residue Ser-414.

The protein belongs to the ketol-acid reductoisomerase family. It depends on Mg(2+) as a cofactor.

It catalyses the reaction (2R)-2,3-dihydroxy-3-methylbutanoate + NADP(+) = (2S)-2-acetolactate + NADPH + H(+). The enzyme catalyses (2R,3R)-2,3-dihydroxy-3-methylpentanoate + NADP(+) = (S)-2-ethyl-2-hydroxy-3-oxobutanoate + NADPH + H(+). Its pathway is amino-acid biosynthesis; L-isoleucine biosynthesis; L-isoleucine from 2-oxobutanoate: step 2/4. It participates in amino-acid biosynthesis; L-valine biosynthesis; L-valine from pyruvate: step 2/4. Involved in the biosynthesis of branched-chain amino acids (BCAA). Catalyzes an alkyl-migration followed by a ketol-acid reduction of (S)-2-acetolactate (S2AL) to yield (R)-2,3-dihydroxy-isovalerate. In the isomerase reaction, S2AL is rearranged via a Mg-dependent methyl migration to produce 3-hydroxy-3-methyl-2-ketobutyrate (HMKB). In the reductase reaction, this 2-ketoacid undergoes a metal-dependent reduction by NADPH to yield (R)-2,3-dihydroxy-isovalerate. This chain is Ketol-acid reductoisomerase (NADP(+)), found in Shewanella oneidensis (strain ATCC 700550 / JCM 31522 / CIP 106686 / LMG 19005 / NCIMB 14063 / MR-1).